A 582-amino-acid polypeptide reads, in one-letter code: Potassium-transporting ATPase potassium-binding subunit (582 aa).

The next 11 membrane-spanning stretches (helical) occupy residues 6-26 (LVQL…LGLY), 65-85 (IYAL…YVLE), 87-107 (LQGG…FVAV), 136-156 (GLAV…VALI), 178-198 (VLYI…WQGV), 277-297 (LEML…GVMI), 304-324 (LAIL…TLAA), 402-422 (GLYG…LMVG), 441-461 (ALVI…AAVI), 505-525 (IAGA…VLAL), and 546-566 (GGIF…LTFV).

This sequence belongs to the KdpA family. The system is composed of three essential subunits: KdpA, KdpB and KdpC.

It localises to the cell inner membrane. In terms of biological role, part of the high-affinity ATP-driven potassium transport (or Kdp) system, which catalyzes the hydrolysis of ATP coupled with the electrogenic transport of potassium into the cytoplasm. This subunit binds the periplasmic potassium ions and delivers the ions to the membrane domain of KdpB through an intramembrane tunnel. The polypeptide is Potassium-transporting ATPase potassium-binding subunit (Solidesulfovibrio magneticus (strain ATCC 700980 / DSM 13731 / RS-1) (Desulfovibrio magneticus)).